The primary structure comprises 331 residues: Serine/threonine-protein phosphatase 6 catalytic subunit (331 aa).

Mn(2+) contacts are provided by Asp-79, His-81, Asp-107, and Asn-139. The active-site Proton donor is His-140. Positions 189 and 264 each coordinate Mn(2+).

It belongs to the PPP phosphatase family. PP-6 (PP-V) subfamily. Forms a complex composed of catalytic subunit pph-6 and regulatory subunit saps-1; the interaction increases pph-6 and saps-1 protein stability. Mn(2+) serves as cofactor.

Its subcellular location is the cytoplasm. The protein resides in the cell cortex. It is found in the cytoskeleton. The protein localises to the spindle pole. It catalyses the reaction O-phospho-L-seryl-[protein] + H2O = L-seryl-[protein] + phosphate. The catalysed reaction is O-phospho-L-threonyl-[protein] + H2O = L-threonyl-[protein] + phosphate. Its function is as follows. Catalytic subunit of protein phosphatase 6 (PP6). In complex with saps-1, promotes actomyosin contractility during cytokinesis by regulating the organization of cortical non-muscle myosin II nmy-2 and thus contributing to correct spindle positioning. Also required for the proper generation of pulling forces on spindle poles during anaphase by regulating the cortical localization of gpr-1, gpr-2 and lin-5. The chain is Serine/threonine-protein phosphatase 6 catalytic subunit from Caenorhabditis elegans.